A 611-amino-acid chain; its full sequence is E-selectin (611 aa).

A signal peptide spans 1–22 (MITSQLLPALTLVLLLFKEGGA). Residues 23–140 (WSYNASTEAM…CDKKKLALCY (118 aa)) enclose the C-type lectin domain. Residues 23–557 (WSYNASTEAM…CEAPTESSIP (535 aa)) are Extracellular-facing. N-linked (GlcNAc...) asparagine glycosylation occurs at asparagine 26. Intrachain disulfides connect cysteine 41–cysteine 139, cysteine 112–cysteine 131, cysteine 144–cysteine 155, cysteine 149–cysteine 164, cysteine 166–cysteine 175, cysteine 181–cysteine 225, cysteine 194–cysteine 207, cysteine 211–cysteine 238, cysteine 243–cysteine 287, cysteine 256–cysteine 269, cysteine 273–cysteine 300, cysteine 305–cysteine 350, cysteine 336–cysteine 363, cysteine 368–cysteine 413, cysteine 399–cysteine 426, cysteine 431–cysteine 476, cysteine 462–cysteine 489, cysteine 494–cysteine 535, and cysteine 521–cysteine 548. Residues glutamate 102, asparagine 104, and glutamate 110 each coordinate Ca(2+). Residues 102–110 (EPNNKQNDE), 114–119 (EIYIKR), and 127–129 (NDE) each bind a carbohydrate. Ca(2+)-binding residues include asparagine 127 and aspartate 128. The 36-residue stretch at 141-176 (TAACTPTSCSGHGECVETVNNYTCKCHPGFRGLRCE) folds into the EGF-like domain. Asparagine 161 carries N-linked (GlcNAc...) asparagine glycosylation. Sushi domains lie at 179–240 (VTCQ…ACNV) and 241–302 (VECS…TCKA). The N-linked (GlcNAc...) asparagine glycan is linked to asparagine 204. Asparagine 266 carries N-linked (GlcNAc...) asparagine glycosylation. 2 N-linked (GlcNAc...) asparagine glycosylation sites follow: asparagine 313 and asparagine 333. Sushi domains lie at 316-365 (VSCS…VCKA), 367-428 (QCKA…TCEA), 430-491 (KCDA…SCQV), and 492-550 (VQCF…TCEA). Asparagine 528 carries N-linked (GlcNAc...) asparagine glycosylation. Residues 558–579 (LAVGLTAGGTSLLTVASFLLWL) form a helical membrane-spanning segment. Topologically, residues 580 to 611 (LKRLRKRAKKFVPASSCQSLQSDGSYHMPCSI) are cytoplasmic.

This sequence belongs to the selectin/LECAM family. As to quaternary structure, interacts with SELPLG/PSGL1 and PODXL2 through the sialyl Lewis X epitope. SELPLG sulfation appears not to be required for this interaction.

It localises to the cell membrane. Cell-surface glycoprotein having a role in immunoadhesion. Mediates in the adhesion of blood neutrophils in cytokine-activated endothelium through interaction with SELPLG/PSGL1. May have a role in capillary morphogenesis. This Canis lupus familiaris (Dog) protein is E-selectin (SELE).